A 132-amino-acid polypeptide reads, in one-letter code: Small ribosomal subunit protein uS8 (132 aa).

It belongs to the universal ribosomal protein uS8 family. In terms of assembly, part of the 30S ribosomal subunit. Contacts proteins S5 and S12.

Its function is as follows. One of the primary rRNA binding proteins, it binds directly to 16S rRNA central domain where it helps coordinate assembly of the platform of the 30S subunit. In Azorhizobium caulinodans (strain ATCC 43989 / DSM 5975 / JCM 20966 / LMG 6465 / NBRC 14845 / NCIMB 13405 / ORS 571), this protein is Small ribosomal subunit protein uS8.